The chain runs to 506 residues: MEEFKRNLELDRSQQYDFIYPLIFQEYIYALAHDRVLKRSFFLENAGYNDKSSLLIVKRLITHLITQMYQQNHFLFSVNDSKQNPILGYNRNFYSQTIFEGFAVVVEIPFYLRLLSFLEGKERVKSYNLRSIHSIFPFLEAQIFHLNNILDILIPHPIHLEILVQTLRYWVKDASSLHFLRFFLYKYPIWNSLITPKKSSFSFSKRNQRFFLFLYNFHVSEYESIFVFLRTQSSHLLSISFETFLERISFYKKIELEVFTKSFKAILWVFKEPFLHYVRYRGKVILASKGTSFLMNKWKYYLVSFWQCYFYIWSQPIRIHINQLSNHSLDFLDYLSSVRLKPLMVRSQMIENAFLIETASKKFDTLIPITPMIGSLSKAQFCNVIGHPISKPVWAALSDSDIIERFAHIYRNISHYHSGYVKKKNLYRIKYILRLSCARTLARKHKSTVRAFSKRLGMGLLEEFFTDEEQVFYLTFPKASSTSGELYGRRIWYLDIICINDLANYE.

The protein belongs to the intron maturase 2 family. MatK subfamily.

It localises to the plastid. Its subcellular location is the chloroplast. Its function is as follows. Usually encoded in the trnK tRNA gene intron. Probably assists in splicing its own and other chloroplast group II introns. This chain is Maturase K, found in Erica tetralix (Cross-leaved heath).